Here is a 548-residue protein sequence, read N- to C-terminus: Putative ATP-dependent RNA helicase R290 (548 aa).

A Helicase ATP-binding domain is found at 38–206; that stretch reads INKVINGEDV…CKVLQLKTNE (169 aa). 51–58 lines the ATP pocket; that stretch reads LMTSAGKS. The DEAH box signature appears at 150 to 153; the sequence is DEAH. Positions 231 to 376 constitute a Helicase C-terminal domain; that stretch reads DIVPIINKYP…KTQLALLEQM (146 aa).

This sequence belongs to the DEAD box helicase family. DEAH subfamily.

The catalysed reaction is ATP + H2O = ADP + phosphate + H(+). This chain is Putative ATP-dependent RNA helicase R290, found in Acanthamoeba polyphaga mimivirus (APMV).